The chain runs to 70 residues: DNA-directed RNA polymerase subunit epsilon (70 aa).

It belongs to the RNA polymerase subunit epsilon family. RNAP is composed of a core of 2 alpha, a beta and a beta' subunit. The core is associated with a delta subunit, and at least one of epsilon or omega. When a sigma factor is associated with the core the holoenzyme is formed, which can initiate transcription.

The catalysed reaction is RNA(n) + a ribonucleoside 5'-triphosphate = RNA(n+1) + diphosphate. A non-essential component of RNA polymerase (RNAP). The polypeptide is DNA-directed RNA polymerase subunit epsilon (Latilactobacillus sakei subsp. sakei (strain 23K) (Lactobacillus sakei subsp. sakei)).